The following is a 587-amino-acid chain: General negative regulator of transcription subunit 4 (587 aa).

An RING-type zinc finger spans residues 33–78; sequence CPLCIEPMDITDKNFFPCPCGYQICQFCYNNIRQNPELNGRCPACR. Residues 94–128 are a coiled coil; sequence EELKMERAKLARKEKERKHREKERKENEYTNRKHL. Residues 137–228 form the RRM domain; sequence NLVYVVGINP…YMDGRLIKAA (92 aa). Residues 229 to 256 form a C3H1-type zinc finger; the sequence is YGTTKYCSSYLRGLPCPNPNCMFLHEPG. Lysine 270 is covalently cross-linked (Glycyl lysine isopeptide (Lys-Gly) (interchain with G-Cter in ubiquitin)). Position 310 is a phosphothreonine (threonine 310). Serine 312 carries the post-translational modification Phosphoserine. Threonine 326 is subject to Phosphothreonine. Serine 360 is modified (phosphoserine). Residues 370-412 form a disordered region; that stretch reads TLNDSLGHHTTPTTENTITSTTTTTNTNATSHSHGSKKKQSLA. The segment covering 377 to 402 has biased composition (low complexity); it reads HHTTPTTENTITSTTTTTNTNATSHS.

Forms a NOT protein complex that comprises NOT1, NOT2, NOT3, NOT4 and NOT5. Subunit of the 1.0 MDa CCR4-NOT core complex that contains CCR4, CAF1, NOT1, NOT2, NOT3, NOT4, NOT5, CAF40 and CAF130. In the complex interacts with NOT1. The core complex probably is part of a less characterized 1.9 MDa CCR4-NOT complex.

The protein localises to the cytoplasm. The protein resides in the nucleus. It carries out the reaction S-ubiquitinyl-[E2 ubiquitin-conjugating enzyme]-L-cysteine + [acceptor protein]-L-lysine = [E2 ubiquitin-conjugating enzyme]-L-cysteine + N(6)-ubiquitinyl-[acceptor protein]-L-lysine.. Its pathway is protein modification; protein ubiquitination. E3 ubiquitin-protein ligase component of the CCR4-NOT core complex, which in the nucleus seems to be a general transcription factor, and in the cytoplasm the major mRNA deadenylase involved in mRNA turnover. The NOT protein subcomplex negatively regulates the basal and activated transcription of many genes. Preferentially affects TC-type TATA element-dependent transcription. Could directly or indirectly inhibit component(s) of the general transcription machinery. In the cytoplasm, catalyzes monoubiquitination of RPS7/es7 in response to stalled ribosomes, initiating a HEL2-dependent response that activates the No-Go Decay (NGD) pathway. The chain is General negative regulator of transcription subunit 4 (MOT2) from Saccharomyces cerevisiae (strain ATCC 204508 / S288c) (Baker's yeast).